The chain runs to 445 residues: MSFEDLGVSRWLSEALAAMKIHTPTAIQSGCIPKILSGHDCIGGAKTGSGKTIAFAAPMLTQWSEDPFGIFGLVLTPTRELALQIAEQFAALGASMNIKISVVVGGEDFVKQTLELQKKPHFVIATPGRLADHILNSGEETISGLRRIKYLVLDEADRLLSNSFGGDLERCFSVLPPSEKRQTCLFTATVTDAVRALKEKPPAQGKPPVFLHEVETVDQVAIPSTLSIKYVFVPSYVKEAYLNSILRLPQYEKSTAVIFVNRTTTAEVLRRTLRKLEFRVASLHSEMPQSERTNSVQRFKAGAARILIATDVASRGLDIPSVELVVNFDIPADPDDFIHRVGRTARAGRSGDAVTIIAEKDIDRIASIEERINKKMELLEEVTDDSVITDSLTATSVAKRESLMEMDKENFGEKRKINRKKRGLETEKIRVVKSKKEKSKKSLRQ.

The Q motif signature appears at 1–29; sequence MSFEDLGVSRWLSEALAAMKIHTPTAIQS. The 177-residue stretch at 32 to 208 folds into the Helicase ATP-binding domain; it reads IPKILSGHDC…EKPPAQGKPP (177 aa). An ATP-binding site is contributed by 45 to 52; it reads AKTGSGKT. The short motif at 154-157 is the DEAD box element; the sequence is DEAD. In terms of domain architecture, Helicase C-terminal spans 247–387; sequence RLPQYEKSTA…LLEEVTDDSV (141 aa). Residues 408-445 are disordered; it reads KENFGEKRKINRKKRGLETEKIRVVKSKKEKSKKSLRQ. The span at 431–445 shows a compositional bias: basic residues; it reads VVKSKKEKSKKSLRQ.

This sequence belongs to the DEAD box helicase family. DDX49/DBP8 subfamily.

The protein localises to the nucleus. It is found in the nucleolus. It catalyses the reaction ATP + H2O = ADP + phosphate + H(+). Its function is as follows. ATP-binding RNA helicase involved in 40S ribosomal subunit biogenesis and is required for the normal formation of 18S rRNAs through pre-rRNA processing at A0, A1 and A2 sites. Required for vegetative growth. The sequence is that of ATP-dependent RNA helicase DBP8 (DBP8) from Scheffersomyces stipitis (strain ATCC 58785 / CBS 6054 / NBRC 10063 / NRRL Y-11545) (Yeast).